The primary structure comprises 57 residues: MAPLRPTRPCPECGKPSTREAYPFCSPRCKNIDLNRWLSGSYVIAGKPLGEEDENDS.

Residues cysteine 10, cysteine 13, cysteine 25, and cysteine 29 each contribute to the Zn(2+) site.

It belongs to the DNA gyrase inhibitor YacG family. As to quaternary structure, interacts with GyrB. It depends on Zn(2+) as a cofactor.

In terms of biological role, inhibits all the catalytic activities of DNA gyrase by preventing its interaction with DNA. Acts by binding directly to the C-terminal domain of GyrB, which probably disrupts DNA binding by the gyrase. The polypeptide is DNA gyrase inhibitor YacG (Brucella abortus (strain 2308)).